The primary structure comprises 287 residues: Elongation factor Ts (287 aa).

Positions 80–83 are involved in Mg(2+) ion dislocation from EF-Tu; it reads TDFL.

The protein belongs to the EF-Ts family.

The protein localises to the cytoplasm. Associates with the EF-Tu.GDP complex and induces the exchange of GDP to GTP. It remains bound to the aminoacyl-tRNA.EF-Tu.GTP complex up to the GTP hydrolysis stage on the ribosome. This chain is Elongation factor Ts, found in Pseudomonas syringae pv. syringae (strain B728a).